We begin with the raw amino-acid sequence, 634 residues long: Chaperone protein dnaK2 (634 aa).

Residue threonine 197 is modified to Phosphothreonine; by autocatalysis. A disordered region spans residues 592–634 (IGSSVYQQPGNQPPAPGTPDSNESNDKGGDDDVIDADFTETKD). A compositionally biased stretch (acidic residues) spans 622 to 634 (DDVIDADFTETKD).

It belongs to the heat shock protein 70 family.

Its function is as follows. Acts as a chaperone. This is Chaperone protein dnaK2 (dnaK2) from Prochlorococcus marinus subsp. pastoris (strain CCMP1986 / NIES-2087 / MED4).